Reading from the N-terminus, the 227-residue chain is Lipoprotein-releasing system ATP-binding protein LolD (227 aa).

One can recognise an ABC transporter domain in the interval 7-227; sequence LQLTGVERHY…TISDGKIVDF (221 aa). Position 43–50 (43–50) interacts with ATP; that stretch reads APSGTGKS.

It belongs to the ABC transporter superfamily. Lipoprotein translocase (TC 3.A.1.125) family. The complex is composed of two ATP-binding proteins (LolD) and two transmembrane proteins (LolC and LolE).

It is found in the cell inner membrane. Functionally, part of the ABC transporter complex LolCDE involved in the translocation of mature outer membrane-directed lipoproteins, from the inner membrane to the periplasmic chaperone, LolA. Responsible for the formation of the LolA-lipoprotein complex in an ATP-dependent manner. The sequence is that of Lipoprotein-releasing system ATP-binding protein LolD from Rhizobium johnstonii (strain DSM 114642 / LMG 32736 / 3841) (Rhizobium leguminosarum bv. viciae).